Reading from the N-terminus, the 201-residue chain is MTDQGENEKKQRRSNATIAVACLSFFVCMIGAAYASVPLYRIFCQVTGYGGTTQRVEQYSNTILDKTIKVRFDANIANGLPWDFKPMQREVTVRIGETTMIKYEAHNLFGEETYGRASFNVAPGRAGAYFNKVECFCFTDNTLKPGEDLELPVVFFVDPEFVNDPDLKDVKTITLSYTFFPIDKPKPVVNAKAVGSTRNGG.

Topologically, residues 1–13 (MTDQGENEKKQRR) are cytoplasmic. Residues 14 to 36 (SNATIAVACLSFFVCMIGAAYAS) traverse the membrane as a helical; Signal-anchor for type II membrane protein segment. The Periplasmic segment spans residues 37–201 (VPLYRIFCQV…KAVGSTRNGG (165 aa)).

Belongs to the COX11/CtaG family.

It localises to the cell inner membrane. Functionally, exerts its effect at some terminal stage of cytochrome c oxidase synthesis, probably by being involved in the insertion of the copper B into subunit I. The polypeptide is Cytochrome c oxidase assembly protein CtaG (Brucella ovis (strain ATCC 25840 / 63/290 / NCTC 10512)).